Consider the following 95-residue polypeptide: Non-specific lipid-transfer protein (95 aa).

Disulfide bonds link cysteine 4–cysteine 52, cysteine 14–cysteine 29, and cysteine 50–cysteine 90.

It belongs to the plant LTP family. As to expression, seeds.

Functionally, plant non-specific lipid-transfer proteins transfer phospholipids as well as galactolipids across membranes. May play a role in wax or cutin deposition in the cell walls of expanding epidermal cells and certain secretory tissues. This chain is Non-specific lipid-transfer protein, found in Eleusine coracana (Indian finger millet).